Reading from the N-terminus, the 867-residue chain is Leucine--tRNA ligase (867 aa).

Positions proline 57–histidine 67 match the 'HIGH' region motif. The tract at residues serine 308–valine 327 is disordered. Residues glutamine 309–lysine 319 show a composition bias toward basic and acidic residues. The short motif at lysine 631–serine 635 is the 'KMSKS' region element. Residue lysine 634 coordinates ATP.

The protein belongs to the class-I aminoacyl-tRNA synthetase family.

It localises to the cytoplasm. The catalysed reaction is tRNA(Leu) + L-leucine + ATP = L-leucyl-tRNA(Leu) + AMP + diphosphate. This chain is Leucine--tRNA ligase, found in Synechococcus sp. (strain CC9311).